The chain runs to 494 residues: BTB/POZ domain and ankyrin repeat-containing protein NH5.1 (494 aa).

A BTB domain is found at serine 25–alanine 130. The interval asparagine 60–glycine 94 is disordered. Positions histidine 61 to asparagine 71 are enriched in pro residues. Over residues alanine 75–glycine 94 the composition is skewed to gly residues. A C2HC NPR-type zinc finger spans residues leucine 136–glycine 150. Residues cysteine 139, cysteine 144, histidine 146, and cysteine 149 each coordinate Zn(2+). 4 ANK repeats span residues asparagine 274–leucine 302, aspartate 303–serine 333, threonine 338–serine 367, and aspartate 371–leucine 405. 2 disordered regions span residues aspartate 421–aspartate 443 and alanine 469–alanine 494.

Belongs to the plant 'ANKYRIN-BTB/POZ' family. 'NOOT-BOP-COCH-like' (NBCL) subfamily. Homodimer. Interacts with TGAL5, TGAL7, TGAL8 and TGAL9.

It is found in the nucleus. The protein localises to the cytoplasm. Its pathway is protein modification; protein ubiquitination. In terms of biological role, may act as a substrate-specific adapter of an E3 ubiquitin-protein ligase complex (CUL3-RBX1-BTB) which mediates the ubiquitination and subsequent proteasomal degradation of target proteins. Transcriptional co-regulator involved in the promotion of leaf and floral meristem fate and determinacy. Required for the abscission of senescent organs, probably by regulating the cell wall disorganization in abscission zones (AZs, e.g. pulvini at the base of leaves). This chain is BTB/POZ domain and ankyrin repeat-containing protein NH5.1, found in Oryza sativa subsp. japonica (Rice).